Reading from the N-terminus, the 122-residue chain is Large ribosomal subunit protein uL14c (122 aa).

It belongs to the universal ribosomal protein uL14 family. In terms of assembly, part of the 50S ribosomal subunit.

Its subcellular location is the plastid. In terms of biological role, binds to 23S rRNA. In Cuscuta gronovii (Common dodder), this protein is Large ribosomal subunit protein uL14c.